The chain runs to 65 residues: uncharacterized protein (65 aa).

Transmembrane regions (helical) follow at residues 12–31 (IVKW…LIVV) and 41–63 (LVAR…AIIV).

The protein localises to the cell membrane. This is an uncharacterized protein from Halalkalibacterium halodurans (strain ATCC BAA-125 / DSM 18197 / FERM 7344 / JCM 9153 / C-125) (Bacillus halodurans).